Reading from the N-terminus, the 287-residue chain is Probable endonuclease 4 (287 aa).

9 residues coordinate Zn(2+): H69, H109, E144, D178, H181, H215, D228, H230, and E260.

It belongs to the AP endonuclease 2 family. Requires Zn(2+) as cofactor.

The enzyme catalyses Endonucleolytic cleavage to 5'-phosphooligonucleotide end-products.. Endonuclease IV plays a role in DNA repair. It cleaves phosphodiester bonds at apurinic or apyrimidinic (AP) sites, generating a 3'-hydroxyl group and a 5'-terminal sugar phosphate. In Thermotoga neapolitana (strain ATCC 49049 / DSM 4359 / NBRC 107923 / NS-E), this protein is Probable endonuclease 4.